The primary structure comprises 340 residues: Phosphoribosylformylglycinamidine cyclo-ligase (340 aa).

This sequence belongs to the AIR synthase family.

Its subcellular location is the cytoplasm. It carries out the reaction 2-formamido-N(1)-(5-O-phospho-beta-D-ribosyl)acetamidine + ATP = 5-amino-1-(5-phospho-beta-D-ribosyl)imidazole + ADP + phosphate + H(+). The protein operates within purine metabolism; IMP biosynthesis via de novo pathway; 5-amino-1-(5-phospho-D-ribosyl)imidazole from N(2)-formyl-N(1)-(5-phospho-D-ribosyl)glycinamide: step 2/2. The sequence is that of Phosphoribosylformylglycinamidine cyclo-ligase from Streptococcus gordonii (strain Challis / ATCC 35105 / BCRC 15272 / CH1 / DL1 / V288).